The chain runs to 155 residues: uncharacterized protein (155 aa).

A signal peptide spans 1–19 (MPLSKTLVQKLQQAGMAIA).

This is an uncharacterized protein from Haemophilus influenzae (strain ATCC 51907 / DSM 11121 / KW20 / Rd).